The primary structure comprises 628 residues: Vacuolar-sorting receptor 3 (628 aa).

The N-terminal stretch at 1–24 is a signal peptide; the sequence is MKQLLCYLPWLLLLTLLVSPLNDA. Topologically, residues 25-569 are lumenal; that stretch reads RFVVEKNSLS…SKTGAQVRSA (545 aa). Residues 56–168 enclose the PA domain; the sequence is QYGGSMAGTV…GFGEKLKKAI (113 aa). N148, N294, and N434 each carry an N-linked (GlcNAc...) asparagine glycan. EGF-like domains follow at residues 416–466 and 469–516; these read ESNE…SHCE and GPGR…KKCE. 7 disulfide bridges follow: C420-C438, C427-C447, C449-C465, C473-C493, C480-C501, C503-C515, and C545-C558. The 43-residue stretch at 517-559 folds into the EGF-like 3; calcium-binding domain; it reads DINECKEKKACQCPECSCKNTWGSYECSCSGDLLYIRDHDTCI. Residues 570-590 traverse the membrane as a helical segment; sequence WAAVWLIMLSLGLAAAGAYLV. The Cytoplasmic segment spans residues 591–628; that stretch reads YKYRLRQYMDSEIRAIMAQYMPLDSQPEIPNHVNDERA. The short motif at 610–613 is the Tyrosine-based internalization motif element; the sequence is YMPL.

This sequence belongs to the VSR (BP-80) family. As to expression, expressed in seeds, seedlings, roots, leaves, flowers and siliques.

The protein localises to the membrane. Its subcellular location is the golgi apparatus membrane. It is found in the cytoplasmic vesicle. The protein resides in the clathrin-coated vesicle membrane. It localises to the prevacuolar compartment membrane. Functionally, vacuolar-sorting receptor (VSR) involved in clathrin-coated vesicles sorting from Golgi apparatus to vacuoles. This Arabidopsis thaliana (Mouse-ear cress) protein is Vacuolar-sorting receptor 3 (VSR3).